The sequence spans 39 residues: Large ribosomal subunit protein bL36 (39 aa).

The protein belongs to the bacterial ribosomal protein bL36 family.

The chain is Large ribosomal subunit protein bL36 from Levilactobacillus brevis (strain ATCC 367 / BCRC 12310 / CIP 105137 / JCM 1170 / LMG 11437 / NCIMB 947 / NCTC 947) (Lactobacillus brevis).